The sequence spans 1380 residues: Mitogen-activated protein kinase kinase kinase 5 (1380 aa).

The disordered stretch occupies residues 30-97 (CRRGGGAATA…GNSGSGGGRR (68 aa)). A compositionally biased stretch (low complexity) spans 37 to 49 (ATAAEGEPSLQPL). The span at 50 to 59 (LVPPPPPPPG) shows a compositional bias: pro residues. Arg-85 and Arg-87 each carry asymmetric dimethylarginine. Ser-90 carries the phosphoserine; by PIM1 and PKB/AKT1 modification. The segment at 649 to 1374 (HCKRFFEMVN…MLCTLWKAII (726 aa)) is interaction with PPIA/CYPA. The Protein kinase domain occupies 687 to 945 (NGDRVVLGKG…ANDLLIDEFL (259 aa)). Residues 693 to 701 (LGKGTYGIV) and Lys-716 each bind ATP. Tyr-725 is subject to Phosphotyrosine. The active-site Proton acceptor is Asp-810. Thr-820 carries the post-translational modification Phosphothreonine; by autocatalysis. A Phosphothreonine; by autocatalysis, MELK and MAP3K6 modification is found at Thr-845. Thr-849 is modified (phosphothreonine; by autocatalysis). Ser-965 carries the phosphoserine modification. Position 973 is a phosphoserine; by autocatalysis (Ser-973). Ser-1036 and Ser-1040 each carry phosphoserine. The disordered stretch occupies residues 1188 to 1215 (ASESDTADPEDLDVEDEHEELSSNQTVR). The segment covering 1192 to 1206 (DTADPEDLDVEDEHE) has biased composition (acidic residues). A coiled-coil region spans residues 1252–1292 (LGRMKIETNRLLEELVRKERELQALLHQAIEEKDQEIRHLK).

Belongs to the protein kinase superfamily. STE Ser/Thr protein kinase family. MAP kinase kinase kinase subfamily. As to quaternary structure, homodimer when inactive. Binds both upstream activators and downstream substrates in multimolecular complexes. Part of a cytoplasmic complex made of HIPK1, DAB2IP and MAP3K5 in response to TNF. This complex formation promotes MAP3K5-JNK activation and subsequent apoptosis. Interacts with SOCS1 which recognizes phosphorylation of Tyr-725 and induces MAP3K5/ASK1 degradation in endothelial cells. Interacts with the 14-3-3 family proteins such as YWHAB, YWHAE, YWHAQ, YWHAH, YWHAZ and SFN. Interacts with ARRB2, BIRC2, DAB2IP, IGF1R, MAP3K6/ASK2, PIM1, PGAM5, SOCS1, STUB1, TRAF2 and TXN. Interacts with ERN1 in a TRAF2-dependent manner. Interacts with calcineurin subunit PPP3R1, PPP5C, PPM1L and TRAF6. Interacts (via N-terminus) with RAF1 and this interaction inhibits the proapoptotic function of MAP3K5. Interacts with DAB2IP (via N-terminus C2 domain); the interaction occurs in a TNF-alpha-dependent manner. Interacts with DUSP13A; may positively regulate apoptosis. Interacts with PPIA/CYPA. Interacts with PRMT1; the interaction results in MAP3K5 methylation by PRMT1 which inhibits MAP3K5 activation. Interacts with TRAF2; the interaction is inhibited by PRMT1. Interacts with TRIM48. Mg(2+) is required as a cofactor. Ser-90 and Ser-1040 are inactivating phosphorylation sites, the former of which is phosphorylated by AKT1. Phosphorylated at Ser-973 which induces association of MAP3K5/ASK1 with the 14-3-3 family proteins and suppresses MAP3K5/ASK1 activity. Calcineurin (CN) dephosphorylates this site. Also dephosphorylated and activated by PGAM5. Phosphorylated at Thr-845 through autophosphorylation and by MAP3K6/ASK2 which leads to activation. Thr-845 is dephosphorylated by PPP5C. Phosphorylation at Ser-973 in response to oxidative stress is negatively regulated by PPIA/CYPA. Post-translationally, ubiquitinated. Tumor necrosis factor (TNF) induces TNFR2-dependent ubiquitination, leading to proteasomal degradation. Ubiquitinated by RC3H2 in a TRIM48-dependent manner. In terms of processing, methylation at Arg-85 and Arg-87 by PRMT1 promotes association of MAP3K5 with thioredoxin and negatively regulates MAP3K5 association with TRAF2, inhibiting MAP3K5 activation. Methylation is blocked by ubiquitination of PRMT1 by TRIM48. Expressed in various adult mouse tissues including heart, brain, lung, liver and kidney.

It is found in the cytoplasm. The protein resides in the endoplasmic reticulum. It carries out the reaction L-seryl-[protein] + ATP = O-phospho-L-seryl-[protein] + ADP + H(+). The enzyme catalyses L-threonyl-[protein] + ATP = O-phospho-L-threonyl-[protein] + ADP + H(+). Activated by various stressors, including oxidative stress, endoplasmic reticulum stress, and calcium overload, as well as by receptor-mediated inflammatory signals, such as the tumor necrosis factor (TNF) and lipopolysaccharide (LPS). Homophilic association of MAP3K5/ASK1 through the C-terminal coiled-coil domains and the heteromeric complex formation of MAP3K5/ASK1 with the reduced form of thioredoxin (TXN), constitutes an inactive form of the kinase. Upon ROS-induced dissociation of TXN from MAP3K5/ASK1, TRAF2 and TRAF6 are reciprocally recruited to MAP3K5/ASK1 and form the active MAP3K5/ASK1 signalosome, in which TRAF2 and TRAF6 appear to facilitate the active configuration of MAP3K5/ASK1. MAP3K5/ASK1 activity is also regulated through several phosphorylation and dephosphorylation events. Thr-845 is an activating phosphorylation site that is autophosphorylated and phosphorylated by MAP3K6/ASK2 and dephosphorylated by PPP5C. Ser-90 and Ser-1040 are inactivating phosphorylation sites, the former of which is phosphorylated by AKT1. Phosphorylation of Ser-973 induces association of MAP3K5/ASK1 with the 14-3-3 family proteins, which suppresses MAP3K5/ASK1 activity. Calcium/calmodulin-activated protein phosphatase calcineurin (PPP3CA) has been shown to directly dephosphorylate this site. SOCS1 binds to ASK1 by recognizing phosphorylation of Tyr-725 and induces MAP3K5/ASK1 degradation in endothelial cells. Also dephosphorylated and activated by PGAM5. Contains an N-terminal autoinhibitory domain. Serine/threonine kinase which acts as an essential component of the MAP kinase signal transduction pathway. Plays an important role in the cascades of cellular responses evoked by changes in the environment. Mediates signaling for determination of cell fate such as differentiation and survival. Plays a crucial role in the apoptosis signal transduction pathway through mitochondria-dependent caspase activation. MAP3K5/ASK1 is required for the innate immune response, which is essential for host defense against a wide range of pathogens. Mediates signal transduction of various stressors like oxidative stress as well as by receptor-mediated inflammatory signals, such as the tumor necrosis factor (TNF) or lipopolysaccharide (LPS). Once activated, acts as an upstream activator of the MKK/JNK signal transduction cascade and the p38 MAPK signal transduction cascade through the phosphorylation and activation of several MAP kinase kinases like MAP2K4/SEK1, MAP2K3/MKK3, MAP2K6/MKK6 and MAP2K7/MKK7. These MAP2Ks in turn activate p38 MAPKs and c-jun N-terminal kinases (JNKs). Both p38 MAPK and JNKs control the transcription factors activator protein-1 (AP-1). The chain is Mitogen-activated protein kinase kinase kinase 5 (Map3k5) from Mus musculus (Mouse).